Reading from the N-terminus, the 107-residue chain is Ferredoxin Fdx8 (107 aa).

4Fe-4S ferredoxin-type domains lie at 1 to 31 (MAYV…GPLA) and 50 to 79 (LQLY…DEDE). [4Fe-4S] cluster contacts are provided by cysteine 9, cysteine 13, cysteine 17, cysteine 21, cysteine 59, cysteine 62, cysteine 65, and cysteine 69.

The cofactor is [4Fe-4S] cluster.

Functionally, ferredoxins are iron-sulfur proteins that transfer electrons in a wide variety of metabolic reactions. Fdx2 can receive electrons from both FdR_A and FdR_B ferredoxin reductases, with a preference for FdR_B compared with FdR_A, and transfer the electrons to the cytochrome P450 CYP260A1. The polypeptide is Ferredoxin Fdx8 (Sorangium cellulosum (strain So ce56) (Polyangium cellulosum (strain So ce56))).